Here is a 366-residue protein sequence, read N- to C-terminus: Ribosomal RNA large subunit methyltransferase M (366 aa).

S-adenosyl-L-methionine contacts are provided by residues Ser188, 221–224 (CPGG), Asp240, Asp260, and Asp277. Residue Lys306 is the Proton acceptor of the active site.

It belongs to the class I-like SAM-binding methyltransferase superfamily. RNA methyltransferase RlmE family. RlmM subfamily. Monomer.

The protein resides in the cytoplasm. It carries out the reaction cytidine(2498) in 23S rRNA + S-adenosyl-L-methionine = 2'-O-methylcytidine(2498) in 23S rRNA + S-adenosyl-L-homocysteine + H(+). Its function is as follows. Catalyzes the 2'-O-methylation at nucleotide C2498 in 23S rRNA. The chain is Ribosomal RNA large subunit methyltransferase M from Escherichia coli O45:K1 (strain S88 / ExPEC).